A 213-amino-acid chain; its full sequence is MAVLSAPGLRGFRILGLRSSVGPAVQARSVHQSVATDGPSSTQPALPKARAVAPKPSSRGEYVVAKLDDLVNWARRSSLWPMTFGLACCAVEMMHMAAPRYDMDRFGVVFRASPRQSDVMIVAGTLTNKMAPALRKVYDQMPEPRYVVSMGSCANGGGYYHYSYSVVRGCDRIVPVDIYIPGCPPTAEALLYGILQLQRKIKRERRLQIWYRR.

The N-terminal 37 residues, 1-37, are a transit peptide targeting the mitochondrion; the sequence is MAVLSAPGLRGFRILGLRSSVGPAVQARSVHQSVATD. Over residues 30-44 the composition is skewed to polar residues; that stretch reads VHQSVATDGPSSTQP. Residues 30-53 are disordered; the sequence is VHQSVATDGPSSTQPALPKARAVA. [4Fe-4S] cluster-binding residues include Cys88 and Cys89. Residue Arg111 is modified to Hydroxyarginine. Positions 153 and 183 each coordinate [4Fe-4S] cluster.

It belongs to the complex I 20 kDa subunit family. In terms of assembly, core subunit of respiratory chain NADH dehydrogenase (Complex I) which is composed of 45 different subunits. This is a component of the iron-sulfur (IP) fragment of the enzyme. It depends on [4Fe-4S] cluster as a cofactor. Post-translationally, hydroxylated ar Arg-111 by NDUFAF5 early in the pathway of assembly of complex I, before the formation of the juncture between peripheral and membrane arms.

It localises to the mitochondrion inner membrane. It carries out the reaction a ubiquinone + NADH + 5 H(+)(in) = a ubiquinol + NAD(+) + 4 H(+)(out). Functionally, core subunit of the mitochondrial membrane respiratory chain NADH dehydrogenase (Complex I) which catalyzes electron transfer from NADH through the respiratory chain, using ubiquinone as an electron acceptor. Essential for the catalytic activity of complex I. The protein is NADH dehydrogenase [ubiquinone] iron-sulfur protein 7, mitochondrial (NDUFS7) of Pan troglodytes (Chimpanzee).